Reading from the N-terminus, the 101-residue chain is Replication restart protein PriB (101 aa).

The SSB domain occupies 1–101 (MTTNNLVLAG…LHAENVELKT (101 aa)).

This sequence belongs to the PriB family. Homodimer. Interacts with PriA and DnaT. Component of the replication restart primosome. Primosome assembly occurs via a 'hand-off' mechanism. PriA binds to replication forks, subsequently PriB then DnaT bind; DnaT then displaces ssDNA to generate the helicase loading substrate.

Its function is as follows. Involved in the restart of stalled replication forks, which reloads the replicative helicase on sites other than the origin of replication; the PriA-PriB pathway is the major replication restart pathway. During primosome assembly it facilitates complex formation between PriA and DnaT on DNA; stabilizes PriA on DNA. Stimulates the DNA unwinding activity of PriA helicase. The polypeptide is Replication restart protein PriB (Shewanella halifaxensis (strain HAW-EB4)).